The sequence spans 727 residues: MFGDSDGSKDANPGAPPSTTDPPFPNRELTLSSYLCEKPTLASAAAGGGGGAGPSSPPNPAAAAAGDDGKHCVERDFLHLSAPKRGDPPGDDSSVVGGKKPRLDSLQLSLSLNSDGPAAPPSSQPPLASLLQPVPATDGDLRGAAAAAAVPAAPARRTYSATTARTRSINSDDMSYSYSIFSHNPSCSLTHNSTDIYAAGEGTNGSVHSRFNFRPMGDGSVAFATPPLKEGTSSFFPTELPARMAAAAAAAAASAGGSFDGGRGGLHASRPDKILRDIVSDSVTAMAQVLQDFPSERLELLREAVRGMIDSHEKRDELASLQRKLERRSDLTTETLGRANRTQLEILVAIKTGIATFVTGKGRVPSSELVEMFLMTRCRNLNCKSTLPVDDCDCKICSTKKGFCSACTCSVCHKFDCAANTCTWVGCDVCGHWCHVACALERNLIRPGPTLKGPIGTTEMQFQCLACNHSSEMFGFVKEVFNCCAENWNAETLMKELDFVRKIFAGCEDFEGKGLHAKAEEVLSLLGKKIISPLDATNSILQFFKYGVTDYSVTGSTSKGILAAQASQSTDMRSLQTPTITPPKSSFNFKTTTSILDTDALKPSPKPLSIEPHFSTASKEDDSSLETIVKCKEAEAKLFQKLADDARKEVDSYRQIVRSRTQKLEEEYAAKLAKVCFQETEEKRRKKLEELKMLENSHYDYLKMKMRMQTDIQGLLERMEATKKMWV.

Residues M1 to A136 form a disordered region. Positions G14–P25 are enriched in pro residues. The segment covering D67 to P88 has biased composition (basic and acidic residues). Residues D104–P117 show a composition bias toward low complexity. Residues A406–S470 form a PHD-type zinc finger. Residues V629–S697 are a coiled coil.

In terms of tissue distribution, widely expressed.

It localises to the nucleus. Probable transcription factor that functions as a regulator of metal transporter genes responsible for essential metals delivery to shoots and normal plant growth. Required for the maintenance of metal transporter gene expression, such as IRT1, IRT2, ZIP1, ZIP9, NRAMP1 and NRAMP5. The polypeptide is Protein TITANIA (Oryza sativa subsp. japonica (Rice)).